The sequence spans 274 residues: Rhamnulose-1-phosphate aldolase (274 aa).

Glutamate 117 is an active-site residue. Zn(2+)-binding residues include histidine 141, histidine 143, and histidine 212.

The protein belongs to the aldolase class II family. RhaD subfamily. Homotetramer. Zn(2+) serves as cofactor.

The protein localises to the cytoplasm. The catalysed reaction is L-rhamnulose 1-phosphate = (S)-lactaldehyde + dihydroxyacetone phosphate. It functions in the pathway carbohydrate degradation; L-rhamnose degradation; glycerone phosphate from L-rhamnose: step 3/3. Functionally, catalyzes the reversible cleavage of L-rhamnulose-1-phosphate to dihydroxyacetone phosphate (DHAP) and L-lactaldehyde. This is Rhamnulose-1-phosphate aldolase from Escherichia coli O6:H1 (strain CFT073 / ATCC 700928 / UPEC).